The chain runs to 560 residues: Probable 2,3-bisphosphoglycerate-independent phosphoglycerate mutase 2 (560 aa).

At Gly2 the chain carries N-acetylglycine. Residues Asp29 and Ser82 each coordinate Mn(2+). The active-site Phosphoserine intermediate is Ser82. Substrate contacts are provided by residues His141, 171–172, Arg207, Arg214, 287–290, and Lys362; these read RD and RADR. Positions 431, 435, 472, 473, and 502 each coordinate Mn(2+).

This sequence belongs to the BPG-independent phosphoglycerate mutase family. As to quaternary structure, monomer. Mn(2+) is required as a cofactor.

The protein resides in the cytoplasm. The catalysed reaction is (2R)-2-phosphoglycerate = (2R)-3-phosphoglycerate. Its pathway is carbohydrate degradation; glycolysis; pyruvate from D-glyceraldehyde 3-phosphate: step 3/5. In terms of biological role, catalyzes the interconversion of 2-phosphoglycerate (2-PGA) and 3-phosphoglycerate (3-PGA). Required for guard cell function (e.g. blue light-, abscisic acid- (ABA), and low CO(2)-regulated stomatal movements) and fertility (e.g. pollen grains production). In Arabidopsis thaliana (Mouse-ear cress), this protein is Probable 2,3-bisphosphoglycerate-independent phosphoglycerate mutase 2 (PGM2).